The chain runs to 181 residues: ATP synthase subunit delta (181 aa).

This sequence belongs to the ATPase delta chain family. F-type ATPases have 2 components, F(1) - the catalytic core - and F(0) - the membrane proton channel. F(1) has five subunits: alpha(3), beta(3), gamma(1), delta(1), epsilon(1). F(0) has three main subunits: a(1), b(2) and c(10-14). The alpha and beta chains form an alternating ring which encloses part of the gamma chain. F(1) is attached to F(0) by a central stalk formed by the gamma and epsilon chains, while a peripheral stalk is formed by the delta and b chains.

It localises to the cell membrane. F(1)F(0) ATP synthase produces ATP from ADP in the presence of a proton or sodium gradient. F-type ATPases consist of two structural domains, F(1) containing the extramembraneous catalytic core and F(0) containing the membrane proton channel, linked together by a central stalk and a peripheral stalk. During catalysis, ATP synthesis in the catalytic domain of F(1) is coupled via a rotary mechanism of the central stalk subunits to proton translocation. In terms of biological role, this protein is part of the stalk that links CF(0) to CF(1). It either transmits conformational changes from CF(0) to CF(1) or is implicated in proton conduction. This Mycoplasma mycoides subsp. mycoides SC (strain CCUG 32753 / NCTC 10114 / PG1) protein is ATP synthase subunit delta.